The chain runs to 454 residues: Chromosomal replication initiator protein DnaA (454 aa).

Residues 1 to 79 are domain I, interacts with DnaA modulators; sequence MSLCLWKQCL…NSPFIKFKVY (79 aa). Residues 79-117 are domain II; that stretch reads YQTSKEKKFKKNILQKIQNLNAKPIWDKIPIFKKSSHRS. Residues 118–334 form a domain III, AAA+ region region; sequence NINKKHSFEN…GALNRVIVNA (217 aa). Residues Gly162, Gly164, Lys165, and Thr166 each coordinate ATP. The tract at residues 335-454 is domain IV, binds dsDNA; it reads NFTHRSITVE…FSNLIRTLSV (120 aa).

It belongs to the DnaA family. In terms of assembly, oligomerizes as a right-handed, spiral filament on DNA at oriC.

The protein localises to the cytoplasm. Plays an essential role in the initiation and regulation of chromosomal replication. ATP-DnaA binds to the origin of replication (oriC) to initiate formation of the DNA replication initiation complex once per cell cycle. Binds the DnaA box (a 9 base pair repeat at the origin) and separates the double-stranded (ds)DNA. Forms a right-handed helical filament on oriC DNA; dsDNA binds to the exterior of the filament while single-stranded (ss)DNA is stabiized in the filament's interior. The ATP-DnaA-oriC complex binds and stabilizes one strand of the AT-rich DNA unwinding element (DUE), permitting loading of DNA polymerase. After initiation quickly degrades to an ADP-DnaA complex that is not apt for DNA replication. Binds acidic phospholipids. This chain is Chromosomal replication initiator protein DnaA, found in Buchnera aphidicola subsp. Schizaphis graminum (strain Sg).